The chain runs to 386 residues: Cell division protein FtsZ (386 aa).

GTP-binding positions include 21-25 (GGGGN), 108-110 (GTG), Glu139, Arg143, and Asn187.

This sequence belongs to the FtsZ family. Homodimer. Polymerizes to form a dynamic ring structure in a strictly GTP-dependent manner. Interacts directly with several other division proteins.

It localises to the cytoplasm. Functionally, essential cell division protein that forms a contractile ring structure (Z ring) at the future cell division site. The regulation of the ring assembly controls the timing and the location of cell division. One of the functions of the FtsZ ring is to recruit other cell division proteins to the septum to produce a new cell wall between the dividing cells. Binds GTP and shows GTPase activity. The sequence is that of Cell division protein FtsZ from Coxiella burnetii (strain RSA 493 / Nine Mile phase I).